The primary structure comprises 1099 residues: MCPSEMGTLWHHWSPVLISLAALFSKVTEGRGILESIQRFSLLPTYLPVTYHINNADVSFFLKEANQDIMRNSSLQSRVESFLIYKSRRLPVLNASYGPFSIEQVVPQDLMLPSNPFGFTNKFSLNWKLKAHILRDKVYLSRPKVQVLFHIMGRDWDDRSAGEKLPCLRVFAFRETREVRGSCRLQGDLGLCVAELELLSSWFSPPTVVAGRRKSVDQPEGTPVELYYTVHPGGERGDCVREDARRSNGIRTGHSDIDESGPPLQRIGSIFLYQTHRKPSLRELRLDNSVAIHYIPKTVRKGDVLTFPVSISRNSTEDRFTLRAKVKKGVNIIGVRASSPSIWDVKERTDYTGKYAPAVIVCQKKAAGSENSADGASYEVMQIDVEVEEPGDLPATQLVTWQVEYPGEITSDLGVSKIYVSPKDLIGVVPLAMEAEILNTAILTGKTVAVPVKVVSVEDDGTVTELLESVECRSSDEDVIKVSDRCDYVFVNGKEMKGKVNVVVNFTYQHLSSPLEMTVWVPRLPLQIEVSDTELNQIKGWRVPIVSSRRPAGDSEEEEDDERRGRGCTLQYQHAMVRVLTQFVAEAAGPGGHLAHLLGSDWQVDITELINDFMQVEEPRIAKLQGGQILMGQELGMTTIQILSPLSDTILAEKTITVLDEKVTITDLGVQLVTGLSLSLQLSPGSNRAIFATAVAQELLQRPKQEAAISCWVQFSDGSVTPLDIYDGKDFSLMATSLDEKVVSIHQDPKFKWPIIAAETEGQGTLVKVEMVISESCQKSKRKSVLAVGTANIKVKFGQNDANPNTSDSRHTGAGVHMENNVSDRRPKKPSQEWGSQEGQYYGSSSMGLMEGRGTTTDRSILQKKKGQESLLDDNSHLQTIPSDLTSFPAQVDLPRSNGEMDGNDLMQASKGLSDLEIGMYALLGVFCLAILVFLINCVTFALKYRHKQVPFEEQEGMSHSHDWVGLSNRTELLENHINFASSQDEQITAIDRGMDFEESKYLLSTNSQKSINGQLFKPLGPIIIDGKDQKSEPPTSPTSKRKRVKFTTFTAVSSDDEYPTRNSIVMSSEDDIKWVCQDLDPGDCKELHNYMERLHENV.

An N-terminal signal peptide occupies residues 1–30 (MCPSEMGTLWHHWSPVLISLAALFSKVTEG). Residues 31-915 (RGILESIQRF…LMQASKGLSD (885 aa)) are Extracellular-facing. N-linked (GlcNAc...) asparagine glycosylation occurs at Asn-505. The segment at 797 to 858 (FGQNDANPNT…LMEGRGTTTD (62 aa)) is disordered. The segment covering 835–848 (GSQEGQYYGSSSMG) has biased composition (low complexity). A helical membrane pass occupies residues 916–936 (LEIGMYALLGVFCLAILVFLI). Residues 937-1099 (NCVTFALKYR…NYMERLHENV (163 aa)) lie on the Cytoplasmic side of the membrane.

This sequence belongs to the TMEM132 family. Interacts (via C-terminus) with NCKAP. As to expression, expressed in mature oligodendrocytes. Detected in the brain, lung, pancreas and testis. Highly expressed in mature neurons of the adult nervous system.

Its subcellular location is the membrane. Regulate neuronals morphology via inhibition of the WAVE regulatory complex (WCR), a complex that controls F-actin cytoskeletal dynamics. The sequence is that of Transmembrane protein 132D from Homo sapiens (Human).